The sequence spans 749 residues: Transcription factor RFX3 (749 aa).

Positions 183 to 258 (HLQWLLDNYE…YHYYGIRVKP (76 aa)) form a DNA-binding region, RFX-type winged-helix. The tract at residues 663-699 (VSPGNLDKDEGSEVESETDEDLDDSSEPRAKREKTEL) is disordered. Acidic residues predominate over residues 674 to 687 (SEVESETDEDLDDS). Residues 688–698 (SEPRAKREKTE) show a composition bias toward basic and acidic residues.

It belongs to the RFX family. In terms of assembly, heterodimer; heterodimerizes with RFX1 and RFX2, and RFX6. As to expression, expressed in ciliated cells of the node and in the ciliated ependymal cells of the subcommissural organ (SCO), choroid plexuses (CP) and ventricular walls during embryonic and postnatal development. Expressed in developing and mature pancreatic endocrine cells during embryogenesis and in adults (at protein level).

It is found in the nucleus. Functionally, transcription factor required for ciliogenesis and islet cell differentiation during endocrine pancreas development. Essential for the differentiation of nodal monocilia and left-right asymmetry specification during embryogenesis. Required for the biogenesis of motile cilia by governing growth and beating efficiency of motile cells. Also required for ciliated ependymal cell differentiation. Together with RFX6, participates in the differentiation of 4 of the 5 islet cell types during endocrine pancreas development, with the exception of pancreatic PP (polypeptide-producing) cells. Regulates transcription by forming a heterodimer with another RFX protein and binding to the X-box in the promoter of target genes. Regulates the expression of genes involved in ciliary assembly (DYNC2LI1, FOXJ1 and BBS4) and genes involved in ciliary motility (DNAH11, DNAH9 and DNAH5). Represses transcription of MAP1A in non-neuronal cells but not in neuronal cells. The sequence is that of Transcription factor RFX3 (Rfx3) from Mus musculus (Mouse).